The following is a 120-amino-acid chain: Large ribosomal subunit protein eL34 (120 aa).

This sequence belongs to the eukaryotic ribosomal protein eL34 family.

The chain is Large ribosomal subunit protein eL34 (RPL34) from Pisum sativum (Garden pea).